The primary structure comprises 557 residues: Anthrax toxin receptor-like (557 aa).

Residues 1 to 25 (MRSHGRWGPCFLLFLLLLPPPLFRA) form the signal peptide. The Extracellular portion of the chain corresponds to 26-345 (GSLRYHGPGW…KSNVSVTSST (320 aa)). The VWFA domain maps to 74–244 (DLYFILDKSG…KAMRDTVDAL (171 aa)). Positions 82, 84, and 148 each coordinate a divalent metal cation. Residues 346-366 (CGIFSNWLYFLLPLLLLPLLL) form a helical membrane-spanning segment. Over 367-557 (CCLWRLCRKK…PTSKAPNTQD (191 aa)) the chain is Cytoplasmic. Disordered stretches follow at residues 380 to 411 (EPPP…LPPP) and 497 to 557 (ESPS…NTQD). Basic and acidic residues predominate over residues 386–395 (KPEKEPEQEK). A compositionally biased stretch (pro residues) spans 396 to 411 (PPPPPPPSPPPPLPPP). Over residues 534–557 (GTLQNPLCPSLPRSPTSKAPNTQD) the composition is skewed to polar residues.

It belongs to the ATR family.

It localises to the membrane. This is Anthrax toxin receptor-like (ANTXRL) from Macaca fascicularis (Crab-eating macaque).